Consider the following 328-residue polypeptide: NADH-quinone oxidoreductase subunit H (328 aa).

A run of 8 helical transmembrane segments spans residues 8 to 28 (VAAIAFALFQAVVILLAAVGA), 81 to 101 (GLFVLAPAIAMASLLLSFMVI), 114 to 134 (IGLLFFFAMAGINVYAVLFAG), 154 to 174 (LSYEVFMGLSLMGVVAMAGSF), 186 to 206 (LWFIVPQFFGFCTFLVAGIAV), 237 to 257 (FFVGEYVGIVLVSALMVTLFL), 265 to 285 (LPPIVWFLLKTAVFVGFFILL), and 304 to 324 (VCLPLTLINLLVTGALILIFS).

Belongs to the complex I subunit 1 family. As to quaternary structure, NDH-1 is composed of 14 different subunits. Subunits NuoA, H, J, K, L, M, N constitute the membrane sector of the complex.

It localises to the cell inner membrane. The catalysed reaction is a quinone + NADH + 5 H(+)(in) = a quinol + NAD(+) + 4 H(+)(out). Its function is as follows. NDH-1 shuttles electrons from NADH, via FMN and iron-sulfur (Fe-S) centers, to quinones in the respiratory chain. The immediate electron acceptor for the enzyme in this species is believed to be ubiquinone. Couples the redox reaction to proton translocation (for every two electrons transferred, four hydrogen ions are translocated across the cytoplasmic membrane), and thus conserves the redox energy in a proton gradient. This subunit may bind ubiquinone. The chain is NADH-quinone oxidoreductase subunit H from Chromohalobacter salexigens (strain ATCC BAA-138 / DSM 3043 / CIP 106854 / NCIMB 13768 / 1H11).